The chain runs to 268 residues: Thiazole synthase (268 aa).

Lys100 functions as the Schiff-base intermediate with DXP in the catalytic mechanism. Residues Gly161, Ala187–Gly188, and Asn209–Thr210 contribute to the 1-deoxy-D-xylulose 5-phosphate site. Residues Ala248–Asn268 are disordered.

It belongs to the ThiG family. In terms of assembly, homotetramer. Forms heterodimers with either ThiH or ThiS.

The protein resides in the cytoplasm. It catalyses the reaction [ThiS sulfur-carrier protein]-C-terminal-Gly-aminoethanethioate + 2-iminoacetate + 1-deoxy-D-xylulose 5-phosphate = [ThiS sulfur-carrier protein]-C-terminal Gly-Gly + 2-[(2R,5Z)-2-carboxy-4-methylthiazol-5(2H)-ylidene]ethyl phosphate + 2 H2O + H(+). The protein operates within cofactor biosynthesis; thiamine diphosphate biosynthesis. In terms of biological role, catalyzes the rearrangement of 1-deoxy-D-xylulose 5-phosphate (DXP) to produce the thiazole phosphate moiety of thiamine. Sulfur is provided by the thiocarboxylate moiety of the carrier protein ThiS. In vitro, sulfur can be provided by H(2)S. The sequence is that of Thiazole synthase from Nitrosomonas eutropha (strain DSM 101675 / C91 / Nm57).